A 323-amino-acid chain; its full sequence is Fos-related antigen 2 (323 aa).

The segment covering 1–27 has biased composition (low complexity); sequence MYQDYPGSFDTSSRGSSGSPGHPEPYS. Residues 1 to 31 are disordered; it reads MYQDYPGSFDTSSRGSSGSPGHPEPYSAGAA. The bZIP domain occupies 124–187; that stretch reads EEKRRIRRER…EKLEFMLVAH (64 aa). A basic motif region spans residues 126 to 128; that stretch reads KRR. The segment at 129–136 is leucine-zipper; that stretch reads IRRERNKL. Disordered regions lie at residues 194–214 and 288–323; these read SPEE…TGAS and ESPL…LLAL. The segment covering 305–317 has biased composition (low complexity); sequence SSSGDQSSDSLNS.

This sequence belongs to the bZIP family. Fos subfamily. As to quaternary structure, heterodimer with JUN.

The protein resides in the nucleus. This Gallus gallus (Chicken) protein is Fos-related antigen 2 (FOSL2).